The chain runs to 641 residues: Sodium-dependent nutrient amino acid transporter 1 (641 aa).

The disordered stretch occupies residues 1–38 (MELKGVQPSNGSSNGSGNGATNAASTEKTDAEKPTAER). Residues 1 to 40 (MELKGVQPSNGSSNGSGNGATNAASTEKTDAEKPTAERTN) are Cytoplasmic-facing. Residues 9–26 (SNGSSNGSGNGATNAAST) are compositionally biased toward low complexity. Basic and acidic residues predominate over residues 27-36 (EKTDAEKPTA). 3 helical membrane-spanning segments follow: residues 41-61 (WGNG…LGNV), 74-94 (GAFL…MYYL), and 111-131 (SVVP…ICII). N-linked (GlcNAc...) asparagine glycans are attached at residues asparagine 185 and asparagine 190. A run of 9 helical transmembrane segments spans residues 229-249 (PDWK…LVIM), 258-278 (AAYF…IRAV), 307-327 (AVVQ…MFAS), 341-361 (IVTT…FAIL), 401-421 (LFSV…IVAL), 447-467 (VCGF…ILTL), 474-494 (TYVV…VYGL), 516-536 (CWSF…MVTI), and 552-572 (IAGW…GLWY).

It belongs to the sodium:neurotransmitter symporter (SNF) (TC 2.A.22) family. As to expression, in larvae, weak specific expression in the anterior midgut just proximal to the gastric caeca reproductive rudiments, common ureters of the Malpighian tubules, and distal swollen portion of the anterior pair of Malpighian tubules. Expression is also seen in the imaginal disks of the head; brain hemispheres and the ventral ganglion. Stronger expression in the posterior midgut.

It localises to the membrane. Its function is as follows. Unusual broad substrate spectrum amino acid:sodium cotransporter that promotes absorption of the D isomers of essential amino acids. Neutral amino acids are the preferred substrates, especially methionine and phenylalanine. This is Sodium-dependent nutrient amino acid transporter 1 (NAAT1) from Drosophila melanogaster (Fruit fly).